We begin with the raw amino-acid sequence, 574 residues long: MWTFLGIATFTYFYKKFGDFITLANREVLLCVLVFLSLGLVLSYRCRHRNGGLLGRQQSGSQFALFSDILSGLPFIGFFWAKSPPESENKEQLEARRRRKGTNISETSLIGTAACTSTSSQNDPEVIIVGAGVLGSALAAVLSRDGRKVTVIERDLKEPDRIVGEFLQPGGYHVLKDLGLGDTVEGLDAQVVNGYMIHDQESKSEVQIPYPLSENNQVQSGRAFHHGRFIMSLRKAAMAEPNAKFIEGVVLQLLEEDDVVMGVQYKDKETGDIKELHAPLTVVADGLFSKFRKSLVSNKVSVSSHFVGFLMKNAPQFKANHAELILANPSPVLIYQISSSETRVLVDIRGEMPRNLREYMVEKIYPQIPDHLKEPFLEATDNSHLRSMPASFLPPSSVKKRGVLLLGDAYNMRHPLTGGGMTVAFKDIKLWRKLLKGIPDLYDDAAIFEAKKSFYWARKTSHSFVVNILAQALYELFSATDDSLHQLRKACFLYFKLGGECVAGPVGLLSVLSPNPLVLIGHFFAVAIYAVYFCFKSEPWITKPRALLSSGAVLYKACSVIFPLIYSEMKYMVH.

At 1–20 (MWTFLGIATFTYFYKKFGDF) the chain is on the cytoplasmic side. Residues 1 to 100 (MWTFLGIATF…EQLEARRRRK (100 aa)) form an interaction with MARCHF6 region. The stretch at 21–41 (ITLANREVLLCVLVFLSLGLV) is an intramembrane region. Residues 42-574 (LSYRCRHRNG…IYSEMKYMVH (533 aa)) lie on the Cytoplasmic side of the membrane. Residues 62–73 (QFALFSDILSGL) form a required for degradation in response to high membrane cholesterol levels region. Positions 118-574 (TSSQNDPEVI…IYSEMKYMVH (457 aa)) are sufficient for enzyme activity. FAD is bound by residues 133–134 (VL), 153–154 (ER), R161, F166, R234, V250, D408, and M421. The hydrophobic; mediates interaction with membranes stretch occupies residues 516–574 (PLVLIGHFFAVAIYAVYFCFKSEPWITKPRALLSSGAVLYKACSVIFPLIYSEMKYMVH).

The protein belongs to the squalene monooxygenase family. As to quaternary structure, interacts (via N-terminal domain) with MARCHF6. Interacts with SMIM22; this interaction modulates lipid droplet formation. Requires FAD as cofactor. In terms of processing, ubiquitinated by MARCHF6 in response to high cholesterol levels in intracellular membranes, leading to proteasomal degradation. Detected in liver (at protein level).

Its subcellular location is the microsome membrane. It is found in the endoplasmic reticulum membrane. It catalyses the reaction squalene + reduced [NADPH--hemoprotein reductase] + O2 = (S)-2,3-epoxysqualene + oxidized [NADPH--hemoprotein reductase] + H2O + H(+). The protein operates within terpene metabolism; lanosterol biosynthesis; lanosterol from farnesyl diphosphate: step 2/3. With respect to regulation, inhibited by NB-598 ((E)N-ethyl-N-(6,6-dimethyl-2-hepten-4-ynyl)-3-[(3,3'-bi-thiophen-5-yl)methoxy]benzene-methanamine). Contrary to fungal enzymes, the mammalian enzyme is only slightly inhibited by terbinafine. Inhibited by tellurite, tellurium dioxide, selenite, and selenium dioxide. Its function is as follows. Catalyzes the stereospecific oxidation of squalene to (S)-2,3-epoxysqualene, and is considered to be a rate-limiting enzyme in steroid biosynthesis. In Homo sapiens (Human), this protein is Squalene monooxygenase (SQLE).